A 111-amino-acid polypeptide reads, in one-letter code: RNA polymerase-binding protein RbpA (111 aa).

It belongs to the RNA polymerase-binding protein RbpA family. As to quaternary structure, forms a complex with the RNAP catalytic core and with free principal sigma factors.

In terms of biological role, binds to RNA polymerase (RNAP), stimulating transcription from principal, but not alternative sigma factor promoters. This chain is RNA polymerase-binding protein RbpA, found in Mycobacterium tuberculosis (strain CDC 1551 / Oshkosh).